The following is a 339-amino-acid chain: Adenylosuccinate synthetase (339 aa).

Residues G12 to S18 and G42 to S44 each bind GTP. The active-site Proton acceptor is D13. Mg(2+) contacts are provided by D13 and G42. IMP-binding positions include D13 to K16, N40 to H43, T127, R141, Q179, T194, and R256. H43 serves as the catalytic Proton donor. Residue T252–R258 participates in substrate binding. Residues R258, M284 to D286, and K324 to G326 each bind GTP.

This sequence belongs to the adenylosuccinate synthetase family. As to quaternary structure, homodimer. The cofactor is Mg(2+).

It localises to the cytoplasm. The enzyme catalyses IMP + L-aspartate + GTP = N(6)-(1,2-dicarboxyethyl)-AMP + GDP + phosphate + 2 H(+). Its pathway is purine metabolism; AMP biosynthesis via de novo pathway; AMP from IMP: step 1/2. Its function is as follows. Plays an important role in the de novo pathway of purine nucleotide biosynthesis. Catalyzes the first committed step in the biosynthesis of AMP from IMP. The polypeptide is Adenylosuccinate synthetase (Pyrococcus sp. (strain ST700)).